The sequence spans 932 residues: DNA mismatch repair protein MutS (932 aa).

615–622 (GPNMAGKS) serves as a coordination point for ATP.

The protein belongs to the DNA mismatch repair MutS family.

Its function is as follows. This protein is involved in the repair of mismatches in DNA. It is possible that it carries out the mismatch recognition step. This protein has a weak ATPase activity. The protein is DNA mismatch repair protein MutS of Clostridium botulinum (strain 657 / Type Ba4).